Reading from the N-terminus, the 146-residue chain is uncharacterized protein (146 aa).

The N-acetyltransferase domain occupies 1–120 (MTDKFDANDE…TILKWEKNMD (120 aa)).

The protein belongs to the acetyltransferase family.

This is an uncharacterized protein from Streptococcus pyogenes serotype M6 (strain ATCC BAA-946 / MGAS10394).